The sequence spans 715 residues: Palmitoyltransferase ZDHHC5 (715 aa).

Residues 1–13 are Cytoplasmic-facing; it reads MPAESGKRFKPSK. The chain crosses the membrane as a helical span at residues 14–34; the sequence is YVPVSAAAIFLVGATTLFFAF. At 35–52 the chain is on the extracellular side; the sequence is TCPGLSLDVSPAVPIYNA. Residues 53–73 form a helical membrane-spanning segment; sequence IMFLFVLANFSMATFMDPGIF. The Cytoplasmic segment spans residues 74-148; the sequence is PRAEEDEDKE…NCIGRRNYRY (75 aa). A Phosphotyrosine modification is found at Tyr-91. The 51-residue stretch at 104–154 folds into the DHHC domain; it reads KWCATCRFYRPPRCSHCSVCDNCVEEFDHHCPWVNNCIGRRNYRYFFLFLL. The S-palmitoyl cysteine intermediate role is filled by Cys-134. The helical transmembrane segment at 149–169 threads the bilayer; the sequence is FFLFLLSLTAHIMGVFGFGLL. Over 170 to 191 the chain is Extracellular; that stretch reads YVLCHIEELSGVRTAVTMAVMC. A helical transmembrane segment spans residues 192 to 212; it reads VAGLFFIPVAGLTGFHVVLVA. Residues 213 to 715 lie on the Cytoplasmic side of the membrane; the sequence is RGRTTNEQVT…VGGTTYEISV (503 aa). Ser-247 is modified (phosphoserine). Positions 289-715 are disordered; it reads GELRRTKSKG…VGGTTYEISV (427 aa). Thr-294 is subject to Phosphothreonine. Ser-296 and Ser-299 each carry phosphoserine. Residue Thr-303 is modified to Phosphothreonine. The residue at position 345 (Ser-345) is a Phosphoserine. Thr-348 and Thr-350 each carry phosphothreonine. Low complexity predominate over residues 359 to 373; it reads SSSSTSAAMPHSSSA. Ser-380, Ser-398, Ser-406, and Ser-409 each carry phosphoserine. Thr-411 carries the post-translational modification Phosphothreonine. A phosphoserine mark is found at Ser-415, Ser-425, Ser-429, and Ser-432. Low complexity predominate over residues 422-432; that stretch reads SSGSRSSSLKS. Thr-436 is modified (phosphothreonine). Over residues 442-478 the composition is skewed to polar residues; it reads QLQSIRSEGTTSTSYKSLANQTRNGSLSYDSLLTPSD. Phosphoserine is present on residues Ser-529 and Ser-554. Over residues 581-597 the composition is skewed to low complexity; that stretch reads PRTSSSSDDSKRSPLSK. Omega-N-methylarginine is present on Arg-617. Ser-621 carries the phosphoserine modification. Thr-659 carries the phosphothreonine modification. Polar residues predominate over residues 666–677; sequence LKTTYSKSNGQP. Phosphoserine is present on residues Ser-684 and Ser-694. Arg-697 is subject to Omega-N-methylarginine.

The protein belongs to the DHHC palmitoyltransferase family. ERF2/ZDHHC9 subfamily. In terms of processing, autopalmitoylated. Palmitoylation of the C-terminal tail regulates stimulation-dependent plasma membrane motility. Phosphorylation regulates association with endocytic proteins and its subcellular localization. Phosphorylation by LYN during fatty acid uptake leads to inactivation of the activity.

The protein resides in the cell membrane. The catalysed reaction is L-cysteinyl-[protein] + hexadecanoyl-CoA = S-hexadecanoyl-L-cysteinyl-[protein] + CoA. Palmitoyltransferase that catalyzes the addition of palmitate onto various protein substrates such as CTNND2, CD36, GSDMD, NLRP3, NOD1, NOD2, STAT3 and S1PR1 thus plays a role in various biological processes including cell adhesion, inflammation, fatty acid uptake, bacterial sensing or cardiac functions. Plays an important role in the regulation of synapse efficacy by mediating palmitoylation of delta-catenin/CTNND2, thereby increasing synaptic delivery and surface stabilization of alpha-amino-3-hydroxy-5-methyl-4-isoxazole propionic acid receptors (AMPARs). Under basal conditions, remains at the synaptic membrane through FYN-mediated phosphorylation that prevents association with endocytic proteins. Neuronal activity enhances the internalization and trafficking of DHHC5 from spines to dendritic shafts where it palmitoylates delta-catenin/CTNND2. Regulates cell adhesion at the plasma membrane by palmitoylating GOLGA7B and DSG2. Plays a role in innate immune response by mediating the palmitoylation of NOD1 and NOD2 and their proper recruitment to the bacterial entry site and phagosomes. Also participates in fatty acid uptake by palmitoylating CD36 and thereby targeting it to the plasma membrane. Upon binding of fatty acids to CD36, gets phosphorylated by LYN leading to inactivation and subsequent CD36 caveolar endocytosis. Controls oligodendrocyte development by catalyzing STAT3 palmitoylation. Acts as a regulator of inflammatory response by mediating palmitoylation of NLRP3 and GSDMD. Palmitoylates NLRP3 to promote inflammasome assembly and activation. Activates pyroptosis by catalyzing palmitoylation of gasdermin-D (GSDMD), thereby promoting membrane translocation and pore formation of GSDMD. The sequence is that of Palmitoyltransferase ZDHHC5 (Zdhhc5) from Rattus norvegicus (Rat).